Reading from the N-terminus, the 37-residue chain is Large ribosomal subunit protein bL36 (37 aa).

This sequence belongs to the bacterial ribosomal protein bL36 family.

The chain is Large ribosomal subunit protein bL36 from Mycobacterium ulcerans (strain Agy99).